Here is a 333-residue protein sequence, read N- to C-terminus: GTPase Obg (333 aa).

Residues 1–159 (MKFIDQTIIQ…RDIQLELILI (159 aa)) form the Obg domain. In terms of domain architecture, OBG-type G spans 160 to 332 (ADVGTLGMPN…LCSDIAFYLQ (173 aa)). GTP contacts are provided by residues 166–173 (GMPNAGKS), 191–195 (FTTLN), 212–215 (DIPG), 282–285 (NKID), and 313–315 (SSI). Mg(2+)-binding residues include Ser-173 and Thr-193.

Belongs to the TRAFAC class OBG-HflX-like GTPase superfamily. OBG GTPase family. Monomer. Mg(2+) is required as a cofactor.

It localises to the cytoplasm. An essential GTPase which binds GTP, GDP and possibly (p)ppGpp with moderate affinity, with high nucleotide exchange rates and a fairly low GTP hydrolysis rate. Plays a role in control of the cell cycle, stress response, ribosome biogenesis and in those bacteria that undergo differentiation, in morphogenesis control. The chain is GTPase Obg from Buchnera aphidicola subsp. Schizaphis graminum (strain Sg).